Consider the following 274-residue polypeptide: Ribosomal RNA small subunit methyltransferase A (274 aa).

Residues asparagine 27, leucine 29, glycine 54, glutamate 75, aspartate 100, and asparagine 121 each contribute to the S-adenosyl-L-methionine site.

The protein belongs to the class I-like SAM-binding methyltransferase superfamily. rRNA adenine N(6)-methyltransferase family. RsmA subfamily.

It is found in the cytoplasm. It carries out the reaction adenosine(1518)/adenosine(1519) in 16S rRNA + 4 S-adenosyl-L-methionine = N(6)-dimethyladenosine(1518)/N(6)-dimethyladenosine(1519) in 16S rRNA + 4 S-adenosyl-L-homocysteine + 4 H(+). Its function is as follows. Specifically dimethylates two adjacent adenosines (A1518 and A1519) in the loop of a conserved hairpin near the 3'-end of 16S rRNA in the 30S particle. May play a critical role in biogenesis of 30S subunits. The chain is Ribosomal RNA small subunit methyltransferase A from Acinetobacter baylyi (strain ATCC 33305 / BD413 / ADP1).